The sequence spans 408 residues: Multidrug resistance protein MdtG (408 aa).

11 helical membrane passes run 16–36, 58–78, 92–112, 115–135, 146–166, 173–193, 224–244, 256–276, 290–310, 319–339, and 378–398; these read LIVAWLGCFLTGAAFSLVMPF, IVFSITFLFSSIASPFWGGLA, LGMGIVMVLMGLAQNIWQFLI, ALLGLLGGFVPNANALIATQV, TLSTGGVSGALLGPMAGGLLA, PVFFITASVLILCFFVTLFCI, LFVTTLIIQVATGSIAPILTL, VAFISGMIASVPGVAALLSAP, ILITALIFSVLLLIPMSYVQT, FLLGAADGALLPAVQTLLVYN, and AVFLVTAGVVLFNAVYSWNSL.

Belongs to the major facilitator superfamily. DHA1 family. MdtG (TC 2.A.1.2.20) subfamily.

Its subcellular location is the cell inner membrane. Its function is as follows. Confers resistance to fosfomycin and deoxycholate. This is Multidrug resistance protein MdtG from Escherichia coli (strain 55989 / EAEC).